We begin with the raw amino-acid sequence, 1176 residues long: Pesticidal crystal protein Cry1Aa (1176 aa).

This sequence belongs to the delta endotoxin family.

In terms of biological role, promotes colloidosmotic lysis by binding to the midgut epithelial cells of many lepidopteran larvae. The polypeptide is Pesticidal crystal protein Cry1Aa (cry1Aa) (Bacillus thuringiensis subsp. entomocidus).